Here is a 323-residue protein sequence, read N- to C-terminus: tRNA U34 carboxymethyltransferase (323 aa).

Residues lysine 91, tryptophan 105, lysine 110, glycine 130, 152–154 (DPT), 181–182 (IE), methionine 196, tyrosine 200, and arginine 315 contribute to the carboxy-S-adenosyl-L-methionine site.

Belongs to the class I-like SAM-binding methyltransferase superfamily. CmoB family. In terms of assembly, homotetramer.

The enzyme catalyses carboxy-S-adenosyl-L-methionine + 5-hydroxyuridine(34) in tRNA = 5-carboxymethoxyuridine(34) in tRNA + S-adenosyl-L-homocysteine + H(+). Its function is as follows. Catalyzes carboxymethyl transfer from carboxy-S-adenosyl-L-methionine (Cx-SAM) to 5-hydroxyuridine (ho5U) to form 5-carboxymethoxyuridine (cmo5U) at position 34 in tRNAs. This is tRNA U34 carboxymethyltransferase from Shigella flexneri.